The chain runs to 476 residues: Ubiquinone biosynthesis monooxygenase COQ6, mitochondrial (476 aa).

Residues 1–35 (MAARIGSMAGLLCVRWWSSAQLAARGGPLVASQRW) constitute a mitochondrion transit peptide. N6-succinyllysine is present on lysine 219.

The protein belongs to the UbiH/COQ6 family. In terms of assembly, component of a multi-subunit COQ enzyme complex, composed of at least COQ3, COQ4, COQ5, COQ6, COQ7 and COQ9. Interacts with COQ8B and COQ7. The cofactor is FAD. In terms of tissue distribution, expressed in the kidney, in podocytes.

It localises to the mitochondrion inner membrane. It is found in the golgi apparatus. The protein resides in the cell projection. The catalysed reaction is 4-hydroxy-3-(all-trans-decaprenyl)benzoate + 2 reduced [2Fe-2S]-[ferredoxin] + O2 + 2 H(+) = 3,4-dihydroxy-5-(all-trans-decaprenyl)benzoate + 2 oxidized [2Fe-2S]-[ferredoxin] + H2O. It carries out the reaction 2-methoxy-6-(all-trans-decaprenyl)phenol + 2 reduced [2Fe-2S]-[ferredoxin] + O2 + 2 H(+) = 2-methoxy-6-(all-trans-decaprenyl)benzene-1,4-diol + 2 oxidized [2Fe-2S]-[ferredoxin] + H2O. It participates in cofactor biosynthesis; ubiquinone biosynthesis. Its function is as follows. FAD-dependent monooxygenase required for two non-consecutive steps during ubiquinone biosynthesis. Required for the C5-ring hydroxylation during ubiquinone biosynthesis by catalyzing the hydroxylation of 4-hydroxy-3-(all-trans-decaprenyl)benzoic acid to 3,4-dihydroxy-5-(all-trans-decaprenyl)benzoic acid. Also acts downstream of COQ4, for the C1-hydroxylation during ubiquinone biosynthesis by catalyzing the hydroxylation of 2-methoxy-6-(all-trans-decaprenyl)phenol to 2-methoxy-6-(all-trans-decaprenyl)benzene-1,4-diol. The electrons required for the hydroxylation reaction are funneled indirectly to COQ6 from NADPH via a ferredoxin/ferredoxin reductase system composed of FDX2 and FDXR. The protein is Ubiquinone biosynthesis monooxygenase COQ6, mitochondrial of Mus musculus (Mouse).